The primary structure comprises 236 residues: Probable ascorbate-specific transmembrane electron transporter 2 (236 aa).

Topologically, residues 1 to 11 (MAAGLGVKAAP) are cytoplasmic. Residues 12-32 (FTYVAHALAVAAAVMVLVWCI) traverse the membrane as a helical segment. One can recognise a Cytochrome b561 domain in the interval 15-219 (VAHALAVAAA…FGAAVVVAAV (205 aa)). Topologically, residues 33–53 (SFRGGLAFEADNKNLIFNVHP) are extracellular. Histidine 52 is a binding site for heme b. The helical transmembrane segment at 54–74 (VLMLIGYIILGSEAIMIYKIF) threads the bilayer. Position 67–75 (67–75 (AIMIYKIFP)) interacts with L-ascorbate. Over 75-84 (PKLNHDTTKL) the chain is Cytoplasmic. Residues 85–105 (IHLILHAIAIVLGAVGIYCAF) traverse the membrane as a helical segment. Heme b-binding residues include histidine 86 and histidine 120. Residues 106–122 (KFHNESGIANLYSLHSW) lie on the Extracellular side of the membrane. 116–125 (LYSLHSWLGI) contacts monodehydro-L-ascorbate radical. A helical membrane pass occupies residues 123–143 (LGIGTISLYGIQWIFGFVAFF). Topologically, residues 144–153 (YPGAAPHVRR) are cytoplasmic. The chain crosses the membrane as a helical span at residues 154-174 (GALPWHVLFGLFVYVLTLATA). Histidine 159 contributes to the heme b binding site. The Extracellular portion of the chain corresponds to 175-196 (ELGLLEKLTFLQSSGLDKYGAE). The chain crosses the membrane as a helical span at residues 197-217 (AFLVNFTGLVVALFGAAVVVA). The Cytoplasmic segment spans residues 218 to 236 (AVAPAHVEEPEGYAPIPVN).

Heme b is required as a cofactor.

It is found in the membrane. Two-heme-containing cytochrome. Catalyzes ascorbate-dependent trans-membrane electron transfer by utilizing a concerted H(+)/e(-) transfer mechanism. In Oryza sativa subsp. japonica (Rice), this protein is Probable ascorbate-specific transmembrane electron transporter 2.